A 39-amino-acid polypeptide reads, in one-letter code: Contryphan-Cal3 (39 aa).

A signal peptide spans 1-20 (MTRTAVLLLTLLFLVAMAAS). A disulfide bridge links C29 with C35.

Expressed by the venom duct.

Its subcellular location is the secreted. In terms of biological role, probable neurotoxin. In Californiconus californicus (California cone), this protein is Contryphan-Cal3.